A 325-amino-acid chain; its full sequence is Secreted RxLR effector protein RXLR-C07 (325 aa).

The first 19 residues, 1-19 (MQGVRITILWCIVLATIYA), serve as a signal peptide directing secretion. 5 TPR repeats span residues 37-75 (RGLR…GEER), 92-125 (AQIL…IEKI), 134-167 (GLSL…VKKG), 218-251 (AELY…FLQR), and 260-293 (AFSL…AVSI). Residues 37–75 (RGLRNAGMKANDERMFKDAIEKLRHAISLLHNRVFGEER) carry the RxLR-dEER motif.

It belongs to the RxLR effector family.

Its subcellular location is the secreted. The protein localises to the host cytoplasm. It localises to the host nucleus. It is found in the host nucleolus. In terms of biological role, secreted effector that suppresses pattern-triggered immunity (PTI) in plant host. This is Secreted RxLR effector protein RXLR-C07 from Plasmopara halstedii (Downy mildew of sunflower).